An 868-amino-acid chain; its full sequence is Translation initiation factor IF-2 (868 aa).

Disordered regions lie at residues 49 to 72 (LSKQHGSAAEPTRMTLKRKTTSTL) and 92 to 276 (KRSD…EHLK). Residues 92–240 (KRSDIEEQQR…KKAEAEEVHL (149 aa)) show a composition bias toward basic and acidic residues. In terms of domain architecture, tr-type G spans 368–537 (SRAPVVTIMG…VLQSELLDLQ (170 aa)). Residues 377 to 384 (GHVDHGKT) form a G1 region. A GTP-binding site is contributed by 377-384 (GHVDHGKT). A G2 region spans residues 402–406 (GITQH). The interval 423–426 (DTPG) is G3. Residues 423-427 (DTPGH) and 477-480 (NKMD) contribute to the GTP site. The interval 477-480 (NKMD) is G4. Residues 513 to 515 (SAK) form a G5 region.

It belongs to the TRAFAC class translation factor GTPase superfamily. Classic translation factor GTPase family. IF-2 subfamily.

Its subcellular location is the cytoplasm. Functionally, one of the essential components for the initiation of protein synthesis. Protects formylmethionyl-tRNA from spontaneous hydrolysis and promotes its binding to the 30S ribosomal subunits. Also involved in the hydrolysis of GTP during the formation of the 70S ribosomal complex. The protein is Translation initiation factor IF-2 of Alteromonas mediterranea (strain DSM 17117 / CIP 110805 / LMG 28347 / Deep ecotype).